Reading from the N-terminus, the 488-residue chain is Aspartyl/glutamyl-tRNA(Asn/Gln) amidotransferase subunit B (488 aa).

This sequence belongs to the GatB/GatE family. GatB subfamily. Heterotrimer of A, B and C subunits.

It carries out the reaction L-glutamyl-tRNA(Gln) + L-glutamine + ATP + H2O = L-glutaminyl-tRNA(Gln) + L-glutamate + ADP + phosphate + H(+). The catalysed reaction is L-aspartyl-tRNA(Asn) + L-glutamine + ATP + H2O = L-asparaginyl-tRNA(Asn) + L-glutamate + ADP + phosphate + 2 H(+). Functionally, allows the formation of correctly charged Asn-tRNA(Asn) or Gln-tRNA(Gln) through the transamidation of misacylated Asp-tRNA(Asn) or Glu-tRNA(Gln) in organisms which lack either or both of asparaginyl-tRNA or glutaminyl-tRNA synthetases. The reaction takes place in the presence of glutamine and ATP through an activated phospho-Asp-tRNA(Asn) or phospho-Glu-tRNA(Gln). The chain is Aspartyl/glutamyl-tRNA(Asn/Gln) amidotransferase subunit B from Chlamydia trachomatis serovar L2 (strain ATCC VR-902B / DSM 19102 / 434/Bu).